A 627-amino-acid chain; its full sequence is UvrABC system protein C (627 aa).

A GIY-YIG domain is found at 26-105 (PEPGVYFMRD…IKQHQPYFNV (80 aa)). Residues 215-250 (QELIDILSEQMEKAAEALNFEVAARIRDQIAGLKSL) form the UVR domain.

The protein belongs to the UvrC family. In terms of assembly, interacts with UvrB in an incision complex.

The protein localises to the cytoplasm. In terms of biological role, the UvrABC repair system catalyzes the recognition and processing of DNA lesions. UvrC both incises the 5' and 3' sides of the lesion. The N-terminal half is responsible for the 3' incision and the C-terminal half is responsible for the 5' incision. This Nostoc sp. (strain PCC 7120 / SAG 25.82 / UTEX 2576) protein is UvrABC system protein C.